Reading from the N-terminus, the 229-residue chain is Large ribosomal subunit protein uL1 (229 aa).

The protein belongs to the universal ribosomal protein uL1 family. Part of the 50S ribosomal subunit.

In terms of biological role, binds directly to 23S rRNA. The L1 stalk is quite mobile in the ribosome, and is involved in E site tRNA release. Its function is as follows. Protein L1 is also a translational repressor protein, it controls the translation of the L11 operon by binding to its mRNA. This chain is Large ribosomal subunit protein uL1, found in Phenylobacterium zucineum (strain HLK1).